Reading from the N-terminus, the 225-residue chain is Urease accessory protein UreG (225 aa).

25-32 is a GTP binding site; sequence GPVGAGKT.

It belongs to the SIMIBI class G3E GTPase family. UreG subfamily. As to quaternary structure, homodimer. UreD, UreF and UreG form a complex that acts as a GTP-hydrolysis-dependent molecular chaperone, activating the urease apoprotein by helping to assemble the nickel containing metallocenter of UreC. The UreE protein probably delivers the nickel.

Its subcellular location is the cytoplasm. Facilitates the functional incorporation of the urease nickel metallocenter. This process requires GTP hydrolysis, probably effectuated by UreG. This chain is Urease accessory protein UreG, found in Haemophilus influenzae (strain ATCC 51907 / DSM 11121 / KW20 / Rd).